The sequence spans 43 residues: Histone H3 (43 aa).

The nucleosome is a histone octamer containing two molecules each of H2A, H2B, H3 and H4 assembled in one H3-H4 heterotetramer and two H2A-H2B heterodimers. The octamer wraps approximately 147 bp of DNA.

Its subcellular location is the nucleus. The protein resides in the chromosome. Its function is as follows. Core component of nucleosome. Nucleosomes wrap and compact DNA into chromatin, limiting DNA accessibility to the cellular machineries which require DNA as a template. Histones thereby play a central role in transcription regulation, DNA repair, DNA replication and chromosomal stability. DNA accessibility is regulated via a complex set of post-translational modifications of histones, also called histone code, and nucleosome remodeling. The chain is Histone H3 from Penaeus vannamei (Whiteleg shrimp).